The primary structure comprises 400 residues: Phosphoglycerate kinase (400 aa).

Substrate-binding positions include 22–24, R38, 61–64, R120, and R153; these read DFN and HLGR. Residues K206, G297, E328, and 354–357 contribute to the ATP site; that span reads GGDT.

This sequence belongs to the phosphoglycerate kinase family. Monomer.

The protein resides in the cytoplasm. The catalysed reaction is (2R)-3-phosphoglycerate + ATP = (2R)-3-phospho-glyceroyl phosphate + ADP. Its pathway is carbohydrate degradation; glycolysis; pyruvate from D-glyceraldehyde 3-phosphate: step 2/5. The chain is Phosphoglycerate kinase from Campylobacter curvus (strain 525.92).